A 76-amino-acid polypeptide reads, in one-letter code: uncharacterized protein (76 aa).

This is an uncharacterized protein from Dictyostelium discoideum (Social amoeba).